The primary structure comprises 71 residues: Small ribosomal subunit protein bS18 (71 aa).

This sequence belongs to the bacterial ribosomal protein bS18 family. Part of the 30S ribosomal subunit. Forms a tight heterodimer with protein bS6.

Functionally, binds as a heterodimer with protein bS6 to the central domain of the 16S rRNA, where it helps stabilize the platform of the 30S subunit. The sequence is that of Small ribosomal subunit protein bS18 from Nostoc punctiforme (strain ATCC 29133 / PCC 73102).